A 128-amino-acid chain; its full sequence is Natriuretic peptides A (128 aa).

A disordered region spans residues 36–84; that stretch reads QVASEQNEEAGAVLSALPEVPSWPGEAGPAQREGGALGRGPWDSSDRSA. Positions 68–78 are excised as a propeptide; sequence EGGALGRGPWD. Position 104 is a phosphoserine (S104). The cysteines at positions 105 and 121 are disulfide-linked. The segment at 122–126 is important for degradation of atrial natriuretic peptide by IDE; the sequence is NSFRY.

The protein belongs to the natriuretic peptide family. Homodimer; disulfide-linked antiparallel dimer. In terms of processing, the precursor molecule is proteolytically cleaved by CORIN at Arg-98 to produce atrial natriuretic peptide. Undergoes further proteolytic cleavage by unknown proteases to give rise to long-acting natriuretic peptide, vessel dilator and kaliuretic peptide. Additional processing gives rise to the auriculin and atriopeptin peptides. In the kidneys, alternative processing by an unknown protease results in the peptide urodilatin. Cleavage by MME initiates degradation of the factor and thereby regulates its activity. Degraded by IDE (in vitro). During IDE degradation, the resulting products can temporarily stimulate NPR2 to produce cGMP, before the fragments are completely degraded and inactivated by IDE (in vitro). Post-translationally, degraded by IDE. In terms of processing, phosphorylation on Ser-104 decreases vasorelaxant activity.

The protein resides in the secreted. Its subcellular location is the perikaryon. It localises to the cell projection. Its function is as follows. Hormone that plays a key role in mediating cardio-renal homeostasis, and is involved in vascular remodeling and regulating energy metabolism. Acts by specifically binding and stimulating NPR1 to produce cGMP, which in turn activates effector proteins, such as PRKG1, that drive various biological responses. Regulates vasodilation, natriuresis, diuresis and aldosterone synthesis and is therefore essential for regulating blood pressure, controlling the extracellular fluid volume and maintaining the fluid-electrolyte balance. Also involved in inhibiting cardiac remodeling and cardiac hypertrophy by inducing cardiomyocyte apoptosis and attenuating the growth of cardiomyocytes and fibroblasts. Plays a role in female pregnancy by promoting trophoblast invasion and spiral artery remodeling in uterus, and thus prevents pregnancy-induced hypertension. In adipose tissue, acts in various cGMP- and PKG-dependent pathways to regulate lipid metabolism and energy homeostasis. This includes up-regulating lipid metabolism and mitochondrial oxygen utilization by activating the AMP-activated protein kinase (AMPK), and increasing energy expenditure by acting via MAPK11 to promote the UCP1-dependent thermogenesis of brown adipose tissue. Binds the clearance receptor NPR3 which removes the hormone from circulation. May have a role in cardio-renal homeostasis through regulation of natriuresis, diuresis, vasodilation, and inhibiting aldosterone synthesis. In vitro, promotes the production of cGMP and induces vasodilation. May promote natriuresis, at least in part, by enhancing prostaglandin E2 synthesis resulting in the inhibition of renal Na+-K+-ATPase. However reports on the involvement of this peptide in mammal blood volume and blood pressure homeostasis are conflicting; according to a report, in vivo it is not sufficient to activate cGMP and does not inhibit collecting duct transport nor effect diuresis and natriuresis. Appears to bind to specific receptors that are distinct from the receptors bound by atrial natriuretic peptide and vessel dilator. Possibly enhances protein excretion in urine by decreasing proximal tubular protein reabsorption. In terms of biological role, may have a role in cardio-renal homeostasis through regulation of natriuresis, diuresis, and vasodilation. In vitro, promotes the production of cGMP and induces vasodilation. May promote natriuresis, at least in part, by enhancing prostaglandin E2 synthesis resulting in the inhibition of renal Na+-K+-ATPase. However reports on the involvement of this peptide in mammal blood volume and blood pressure homeostasis are conflicting; according to a report it is not sufficient to activate cGMP and does not inhibit collecting duct transport nor effect diuresis and natriuresis. Appears to bind to specific receptors that are distinct from the receptors bound by the atrial natriuretic and long-acting natriuretic peptides. Possibly functions in protein excretion in urine by maintaining the integrity of the proximal tubules and enhancing protein excretion by decreasing proximal tubular protein reabsorption. Functionally, may have a role in cardio-renal homeostasis through regulation of diuresis and inhibiting aldosterone synthesis. In vitro, promotes the production of cGMP and induces vasodilation. May promote natriuresis, at least in part, by enhancing prostaglandin E2 synthesis resulting in the inhibition of renal Na+-K+-ATPase. May have a role in potassium excretion but not sodium excretion (natriuresis). Possibly enhances protein excretion in urine by decreasing proximal tubular protein reabsorption. Its function is as follows. Hormone produced in the kidneys that appears to be important for maintaining cardio-renal homeostasis. Mediates vasodilation, natriuresis and diuresis primarily in the renal system, in order to maintain the extracellular fluid volume and control the fluid-electrolyte balance. Specifically binds and stimulates cGMP production by renal transmembrane receptors, likely NPR1. Urodilatin not ANP, may be the natriuretic peptide responsible for the regulation of sodium and water homeostasis in the kidney. May have a role in cardio-renal homeostasis through regulation of natriuresis and vasodilation. In vivo promotes natriuresis and in vitro, vasodilates renal artery strips. In terms of biological role, may have a role in cardio-renal homeostasis through regulation of regulation of natriuresis and vasodilation. In vivo promotes natriuresis. In vitro, vasodilates intestinal smooth muscle but not smooth muscle strips. Functionally, may have a role in cardio-renal homeostasis through regulation of natriuresis and vasodilation. In vivo promotes natriuresis. In vitro, selectively vasodilates intestinal and vascular smooth muscle strips. Its function is as follows. May have a role in cardio-renal homeostasis through regulation of natriuresis and vasodilation. In vivo promotes natriuresis. In vitro, selectively vasodilates intestinal smooth muscle but not vascular smooth muscle strips. The polypeptide is Natriuretic peptides A (NPPA) (Cavia porcellus (Guinea pig)).